The sequence spans 252 residues: MILYEYPFNERIRTLLRLEDLFDRLDYFLGQEHPLQHHVALTTLFEIIDVAGRADLKTDLIKELERQRQALTALRVNPQIDQEALDAIIGEIEQGIAMLNQTVGKAGQLLTDNEWLTSIRSRAIIPGGTCEFDLPAYYAWQHRPAEERRADILKWARPLVALRAGTSTVLRLLRESGQSGKVIATGGSYQQMLSGRSYQLMQVHLDDSLLAFIPEMSANKYMLWVRFTQQDGDLRPRSVDADIPFLLKLCNF.

It belongs to the ZapD family. As to quaternary structure, interacts with FtsZ.

The protein resides in the cytoplasm. Cell division factor that enhances FtsZ-ring assembly. Directly interacts with FtsZ and promotes bundling of FtsZ protofilaments, with a reduction in FtsZ GTPase activity. This is Cell division protein ZapD from Cupriavidus pinatubonensis (strain JMP 134 / LMG 1197) (Cupriavidus necator (strain JMP 134)).